The primary structure comprises 2322 residues: Genome polyprotein (2322 aa).

A Peptidase C28 domain is found at 29–182 (MEFTLYNGEK…NPADVLVFVP (154 aa)). Residues Cys-51, His-148, and Asp-163 each act as for leader protease activity in the active site. Disordered stretches follow at residues 199 to 219 (RLRGAGQSSPTTGSQNQSGNT) and 238 to 262 (QLGDNAISGGSNEGSTDTTSTHTNN). Gly-202 is lipidated: N-myristoyl glycine; by host. Polar residues-rich tracts occupy residues 204 to 219 (GQSSPTTGSQNQSGNT) and 238 to 251 (QLGDNAISGGSNEG). Residues 252 to 262 (STDTTSTHTNN) are compositionally biased toward low complexity. Residues 869–871 (RGD) carry the Cell attachment site motif. An SF3 helicase domain is found at 1189 to 1353 (NVHIANLCKV…DGYKINNKLD (165 aa)). 1217-1224 (GKSGQGKS) provides a ligand contact to ATP. The stretch at 1484–1504 (FEVVALCLTLLANIVIMLRQA) is an intramembrane region. Residues 1512 to 1574 (DDPLDGDVTL…PRAEGPYAGP (63 aa)) form a disordered region. Residues 1539–1553 (FRERSPTEQGTREDA) show a composition bias toward basic and acidic residues. Residues Tyr-1571, Tyr-1594, and Tyr-1618 each carry the O-(5'-phospho-RNA)-tyrosine modification. Residues 1642–1838 (APPTDLQKMV…YCSCVSRSML (197 aa)) form the Peptidase C3 domain. His-1685 serves as the catalytic For protease 3C activity; Proton donor/acceptor. Catalysis depends on for protease 3C activity residues Asp-1723 and Cys-1802. A Nuclear localization signal motif is present at residues 1868 to 1876 (MRKTKLAPT). The RdRp catalytic domain occupies 2086-2204 (KNVWDVDYSA…ASDYDLDFEA (119 aa)).

Belongs to the picornaviruses polyprotein family. As to quaternary structure, interacts with host ISG15. In terms of assembly, interacts (via R-G-D motif) with host ITGAV/ITGB6. Interacts with host MAVS; this interaction inhibits binding of host TRAF3 to MAVS, thereby suppressing interferon-mediated responses. Forms homooligomers. As to quaternary structure, homohexamer. Interacts with host VIM. Interacts with host BECN1. In terms of assembly, interacts with host DCTN3. Interacts with RNA-dependent RNA polymerase; this interaction allows 3B-1 to binds 2 polymerases and act as a primer. It also allows the recruitment of the RNA-dependent RNA polymerase to host membranes. As to quaternary structure, interacts with RNA-dependent RNA polymerase; this interaction allows 3B-2 to act as a primer. In terms of assembly, interacts with RNA-dependent RNA polymerase; this interaction allows 3B-3 to act as a primer. Interacts with 3B-1; this interaction allows 3B-1 to binds 2 polymerases and act as a primer. It also allows the recruitment of the RNA-dependent RNA polymerase to host membranes. Interacts with 3B-2; this interaction allows 3B-2 to act as a primer. Interacts with 3B-3; this interaction allows 3B-3 to act as a primer. Post-translationally, removes six residues from its own C-terminus, generating sLb(pro). Specific enzymatic cleavages in vivo by the viral proteases yield a variety of precursors and mature proteins. The polyprotein seems to be cotranslationally cleaved at the 2A/2B junction by a ribosomal skip from one codon to the next without formation of a peptide bond. This process would release the L-P1-2A peptide from the translational complex. In terms of processing, during virion maturation, immature virions are rendered infectious following cleavage of VP0 into VP4 and VP2. This maturation seems to be an autocatalytic event triggered by the presence of RNA in the capsid and is followed by a conformational change of the particle. Post-translationally, myristoylation is required during RNA encapsidation and formation of the mature virus particle. Uridylylated by the polymerase and covalently linked to the 5'-end of genomic RNA. These uridylylated forms act as a nucleotide-peptide primer for the polymerase.

It is found in the host nucleus. Its subcellular location is the host cytoplasm. It localises to the virion. The protein localises to the host endoplasmic reticulum membrane. The protein resides in the host cytoplasmic vesicle membrane. It catalyses the reaction Autocatalytically cleaves itself from the polyprotein of the foot-and-mouth disease virus by hydrolysis of a Lys-|-Gly bond, but then cleaves host cell initiation factor eIF-4G at bonds -Gly-|-Arg- and -Lys-|-Arg-.. The catalysed reaction is a ribonucleoside 5'-triphosphate + H2O = a ribonucleoside 5'-diphosphate + phosphate + H(+). The enzyme catalyses RNA(n) + a ribonucleoside 5'-triphosphate = RNA(n+1) + diphosphate. It carries out the reaction Selective cleavage of Gln-|-Gly bond in the poliovirus polyprotein. In other picornavirus reactions Glu may be substituted for Gln, and Ser or Thr for Gly.. In terms of biological role, autocatalytically cleaves itself from the polyprotein at the L/VP0 junction. Also cleaves the host translation initiation factors EIF4G1 and EIF4G3, in order to shut off the capped cellular mRNA transcription. Plays a role in counteracting host innate antiviral response using diverse mechanisms. Possesses a deubiquitinase activity acting on both 'Lys-48' and 'Lys-63'-linked polyubiquitin chains. In turn, inhibits the ubiquitination and subsequent activation of key signaling molecules of type I IFN response such as host RIGI, TBK1, TRAF3 and TRAF6. Inhibits host NF-kappa-B activity by inducing a decrease in RELA mRNA levels. Cleaves a peptide bond in the C-terminus of host ISG15, resulting in the damaging of this modifier that can no longer be attached to target proteins. Also cleaves host G3BP1 and G3BP2 in order to inhibit cytoplasmic stress granules assembly. Its function is as follows. Lies on the inner surface of the capsid shell. After binding to the host receptor, the capsid undergoes conformational changes. Capsid protein VP4 is released, capsid protein VP1 N-terminus is externalized, and together, they shape a pore in the host membrane through which the viral genome is translocated into the host cell cytoplasm. After genome has been released, the channel shrinks. Forms an icosahedral capsid of pseudo T=3 symmetry with capsid proteins VP1 and VP3. The capsid is composed of 60 copies of each capsid protein organized in the form of twelve pentamers and encloses the viral positive strand RNA genome. Upon acidifcation in the endosome, dissociates into pentamers. Functionally, forms an icosahedral capsid of pseudo T=3 symmetry with capsid proteins VP0 and VP3. The capsid is composed of 60 copies of each capsid protein organized in the form of twelve pentamers and encloses the viral positive strand RNA genome. Upon acidifcation in the endosome, dissociates into pentamers. In terms of biological role, forms an icosahedral capsid of pseudo T=3 symmetry with capsid proteins VP2 and VP3. The capsid is composed of 60 copies of each capsid protein organized in the form of twelve pentamers and encloses the viral positive strand RNA genome. Mediates cell entry by attachment to an integrin receptor, usually host ITGAV/ITGB6. In addition, targets host MAVS to suppress type I IFN pathway. Upon acidifcation in the endosome, dissociates into pentamers. Its function is as follows. Mediates self-processing of the polyprotein by a translational effect termed 'ribosome skipping'. Mechanistically, 2A-mediated cleavage occurs between the C-terminal glycine and the proline of the downstream protein 2B. In the case of foot-and-mouth disease virus, the 2A oligopeptide is post-translationally 'trimmed' from the C-terminus of the upstream protein 1D by 3C proteinase. Plays an essential role in the virus replication cycle by acting as a viroporin. Creates a pore in the host endoplasmic reticulum and as a consequence releases Ca2+ in the cytoplasm of infected cell. In turn, high levels of cytoplasmic calcium may trigger membrane trafficking and transport of viral ER-associated proteins to viroplasms, sites of viral genome replication. Functionally, associates with and induces structural rearrangements of intracellular membranes. Triggers host autophagy by interacting with host BECN1 and thereby promotes viral replication. Participates in viral replication and interacts with host DHX9. Displays RNA-binding, nucleotide binding and NTPase activities. May play a role in virion morphogenesis and viral RNA encapsidation by interacting with the capsid protein VP3. In terms of biological role, plays important roles in virus replication, virulence and host range. Cooperates with host DDX56 to inhibit IRF3 nuclear translocation and subsequent type I interferon production. Its function is as follows. Covalently linked to the 5'-end of both the positive-strand and negative-strand genomic RNAs. Acts as a genome-linked replication primer. Cysteine protease that generates mature viral proteins from the precursor polyprotein. In addition to its proteolytic activity, binds to viral RNA and thus influences viral genome replication. RNA and substrate bind cooperatively to the protease. Functionally, RNA-directed RNA polymerase 3D-POL replicates genomic and antigenomic RNA by recognizing replications specific signals. Covalently attaches UMP to a tyrosine of VPg, which is used to prime RNA synthesis. The positive stranded RNA genome is first replicated at virus induced membranous vesicles, creating a dsRNA genomic replication form. This dsRNA is then used as template to synthesize positive stranded RNA genomes. ss(+)RNA genomes are either translated, replicated or encapsidated. The sequence is that of Genome polyprotein from Foot-and-mouth disease virus (isolate Swine/Taiwan/OTai/1997 serotype O) (FMDV).